A 303-amino-acid chain; its full sequence is Bifunctional protein FolD (303 aa).

Residues 175 to 177 (GVS) and I243 each bind NADP(+).

This sequence belongs to the tetrahydrofolate dehydrogenase/cyclohydrolase family. As to quaternary structure, homodimer.

It carries out the reaction (6R)-5,10-methylene-5,6,7,8-tetrahydrofolate + NADP(+) = (6R)-5,10-methenyltetrahydrofolate + NADPH. The catalysed reaction is (6R)-5,10-methenyltetrahydrofolate + H2O = (6R)-10-formyltetrahydrofolate + H(+). It functions in the pathway one-carbon metabolism; tetrahydrofolate interconversion. Functionally, catalyzes the oxidation of 5,10-methylenetetrahydrofolate to 5,10-methenyltetrahydrofolate and then the hydrolysis of 5,10-methenyltetrahydrofolate to 10-formyltetrahydrofolate. The chain is Bifunctional protein FolD from Xanthomonas oryzae pv. oryzae (strain PXO99A).